Reading from the N-terminus, the 329-residue chain is Quinolinate synthase (329 aa).

Iminosuccinate-binding residues include His44 and Ser61. Position 106 (Cys106) interacts with [4Fe-4S] cluster. Iminosuccinate-binding positions include 132–134 (YIN) and Ser149. Cys192 serves as a coordination point for [4Fe-4S] cluster. Residues 218–220 (HPE) and Thr235 each bind iminosuccinate. Cys285 serves as a coordination point for [4Fe-4S] cluster.

The protein belongs to the quinolinate synthase family. Type 2 subfamily. [4Fe-4S] cluster is required as a cofactor.

It is found in the plastid. It localises to the cyanelle. It catalyses the reaction iminosuccinate + dihydroxyacetone phosphate = quinolinate + phosphate + 2 H2O + H(+). Its pathway is cofactor biosynthesis; NAD(+) biosynthesis; quinolinate from iminoaspartate: step 1/1. Catalyzes the condensation of iminoaspartate with dihydroxyacetone phosphate to form quinolinate. The chain is Quinolinate synthase from Cyanophora paradoxa.